Consider the following 51-residue polypeptide: DNA-binding protein (51 aa).

Residues Met-1–Tyr-51 are disordered. A run of 2 repeats spans residues Arg-5–Ser-10 and Arg-17–Ser-22. Residues Arg-5–Ser-22 are 2 X 6 AA repeats of R-R-R-R-S-S. Residues Thr-16 to Tyr-51 show a composition bias toward basic residues.

Post-translationally, probably phosphorylated in infected cells.

Its subcellular location is the virion. Thought to be responsible for DNA condensation during packaging of the nucleocapsids. In Orgyia pseudotsugata (Douglas-fir tussock moth), this protein is DNA-binding protein (P6.5).